The following is a 1390-amino-acid chain: Contactin (1390 aa).

The first 18 residues, 1–18 (MLAKIGLLASILVLNLVG), serve as a signal peptide directing secretion. The segment at 25-67 (SENLPDPDPQSGQQPQNYQPSYNKDYSPRYNPLYTGQQSADPN) is disordered. Residues 58-67 (YTGQQSADPN) show a composition bias toward polar residues. Ig-like C2-type domains are found at residues 362-463 (PYFV…AHLN), 468-561 (MEFN…LRVT), 576-656 (PKVF…IYIN), 661-745 (PQFT…TSFS), 756-843 (PSFK…ARVI), and 848-939 (IRFI…TSVS). Residue N369 is glycosylated (N-linked (GlcNAc...) asparagine). Cystine bridges form between C388–C446, C489–C540, C593–C640, and C682–C734. N-linked (GlcNAc...) asparagine glycans are attached at residues N537, N604, N629, N691, and N774. 2 cysteine pairs are disulfide-bonded: C779–C827 and C870–C923. N-linked (GlcNAc...) asparagine glycosylation is found at N912, N986, and N991. Fibronectin type-III domains are found at residues 946-1048 (APGG…TYED), 1053-1151 (APRN…SAED), 1156-1254 (APQK…TYRK), and 1259-1357 (PPSS…MGKT). Residues N1166, N1171, and N1307 are each glycosylated (N-linked (GlcNAc...) asparagine). A1362 carries the GPI-anchor amidated alanine lipid modification. Positions 1363 to 1390 (NTRHGHNINTALILSTLLLISTFLYTSQ) are cleaved as a propeptide — removed in mature form.

It belongs to the immunoglobulin superfamily. Contactin family. In terms of assembly, forms a complex with Nrg and Nrx. Forms a complex composed of septa junction proteins Nrx-IV/Nrx, Tsf2/MTf, Cont and Nrg during late embryogenesis. N-glycosylated. In terms of tissue distribution, expressed in ectodermally derived epithelial cells from stage 12. All these tissues, such as epidermis, hindgut, foregut, salivary glands and trachea, which contain pleated septate junctions. Expressed by ectodermally derived epithelial cells and along peripheral nerves. Not present in midline glial cells. Expressed in epithelial cells and glial cells of peripheral nerves.

It localises to the cell membrane. Its subcellular location is the cell junction. The protein localises to the septate junction. Its function is as follows. Required for organization of septate junctions and paracellular barrier functions. Septate junctions, which are the equivalent of vertebrates tight junctions, are characterized by regular arrays of transverse structures that span the intermembrane space and form a physical barrier to diffusion. In Drosophila melanogaster (Fruit fly), this protein is Contactin (Cont).